A 297-amino-acid chain; its full sequence is Pyridoxal 5'-phosphate synthase subunit SNZ1 (297 aa).

Asp-23 contacts D-ribose 5-phosphate. The Schiff-base intermediate with D-ribose 5-phosphate role is filled by Lys-80. Gly-152 is a D-ribose 5-phosphate binding site. Position 164 (Arg-164) interacts with D-glyceraldehyde 3-phosphate. D-ribose 5-phosphate is bound by residues Gly-214 and 235-236; that span reads GS.

This sequence belongs to the PdxS/SNZ family. As to quaternary structure, homohexamer. Interacts with AIM18.

The catalysed reaction is aldehydo-D-ribose 5-phosphate + D-glyceraldehyde 3-phosphate + L-glutamine = pyridoxal 5'-phosphate + L-glutamate + phosphate + 3 H2O + H(+). The protein operates within cofactor biosynthesis; pyridoxal 5'-phosphate biosynthesis. Its function is as follows. Catalyzes the formation of pyridoxal 5'-phosphate from ribose 5-phosphate (RBP), glyceraldehyde 3-phosphate (G3P) and ammonia. The ammonia is provided by a SNO isoform. Can also use ribulose 5-phosphate and dihydroxyacetone phosphate as substrates, resulting from enzyme-catalyzed isomerization of RBP and G3P, respectively. In Saccharomyces cerevisiae (strain ATCC 204508 / S288c) (Baker's yeast), this protein is Pyridoxal 5'-phosphate synthase subunit SNZ1 (SNZ1).